A 667-amino-acid polypeptide reads, in one-letter code: tRNA 5-methylaminomethyl-2-thiouridine biosynthesis bifunctional protein MnmC (667 aa).

The interval 1 to 241 (MHKLTFAQLS…KREMLCGEKA (241 aa)) is tRNA (mnm(5)s(2)U34)-methyltransferase. The tract at residues 268–667 (VGGGIASLFV…RKWLKGSKVV (400 aa)) is FAD-dependent cmnm(5)s(2)U34 oxidoreductase.

The protein in the N-terminal section; belongs to the methyltransferase superfamily. tRNA (mnm(5)s(2)U34)-methyltransferase family. It in the C-terminal section; belongs to the DAO family. FAD serves as cofactor.

The protein resides in the cytoplasm. The enzyme catalyses 5-aminomethyl-2-thiouridine(34) in tRNA + S-adenosyl-L-methionine = 5-methylaminomethyl-2-thiouridine(34) in tRNA + S-adenosyl-L-homocysteine + H(+). Its function is as follows. Catalyzes the last two steps in the biosynthesis of 5-methylaminomethyl-2-thiouridine (mnm(5)s(2)U) at the wobble position (U34) in tRNA. Catalyzes the FAD-dependent demodification of cmnm(5)s(2)U34 to nm(5)s(2)U34, followed by the transfer of a methyl group from S-adenosyl-L-methionine to nm(5)s(2)U34, to form mnm(5)s(2)U34. In Haemophilus ducreyi (strain 35000HP / ATCC 700724), this protein is tRNA 5-methylaminomethyl-2-thiouridine biosynthesis bifunctional protein MnmC.